The sequence spans 108 residues: Long neurotoxin 13 (108 aa).

The first 21 residues, 1-21, serve as a signal peptide directing secretion; the sequence is MKTLLLTLVVVTIVCLDLAYT. Disulfide bonds link C24–C42, C35–C63, C48–C52, C67–C78, and C79–C84.

It belongs to the three-finger toxin family. Long-chain subfamily. Type II alpha-neurotoxin sub-subfamily. Expressed by the venom gland.

It is found in the secreted. In terms of biological role, binds with high affinity to muscular (alpha-1/CHRNA1) and neuronal (alpha-7/CHRNA7) nicotinic acetylcholine receptor (nAChR) and inhibits acetylcholine from binding to the receptor, thereby impairing neuromuscular and neuronal transmission. This Drysdalia coronoides (White-lipped snake) protein is Long neurotoxin 13.